The primary structure comprises 492 residues: Fibroblast growth factor receptor substrate 3 (492 aa).

The N-myristoyl glycine moiety is linked to residue Gly2. The IRS-type PTB domain maps to 13–115 (VPDNHPTKFK…QCNSINVMEE (103 aa)). Disordered regions lie at residues 153 to 173 (GEGPRFSAPRRLSTSSLRHPS), 338 to 455 (QLGG…SDSY), and 467 to 492 (SNLQRALPRDDGTARKTRHNSTDLPL).

In terms of assembly, binds NTRK1. Binds FGFR1, NGFR, GRB2, PTPN11 and ERK2. Phosphorylated by ULK2 in vitro. Phosphorylated on tyrosine residues upon stimulation by BFGF or NGFB.

It is found in the membrane. Functionally, adapter protein that links FGF and NGF receptors to downstream signaling pathways. Involved in the activation of MAP kinases. Down-regulates ERK2 signaling by interfering with the phosphorylation and nuclear translocation of ERK2. This is Fibroblast growth factor receptor substrate 3 (FRS3) from Homo sapiens (Human).